The following is a 445-amino-acid chain: GTPase Der (445 aa).

2 EngA-type G domains span residues 3-167 (PVIA…YAGQ) and 180-353 (IKIA…AAAM). Residues 9–16 (GRPNVGKS), 56–60 (DTGGF), 119–122 (NKAE), 186–193 (GRPNVGKS), 233–237 (DTAGL), and 298–301 (NKWD) each bind GTP. Residues 354–438 (AKLPTPKLTR…PLRIEFRSSN (85 aa)) form the KH-like domain.

The protein belongs to the TRAFAC class TrmE-Era-EngA-EngB-Septin-like GTPase superfamily. EngA (Der) GTPase family. Associates with the 50S ribosomal subunit.

Functionally, GTPase that plays an essential role in the late steps of ribosome biogenesis. This chain is GTPase Der, found in Burkholderia cenocepacia (strain HI2424).